A 354-amino-acid chain; its full sequence is Hyaluronan and proteoglycan link protein 1 (354 aa).

Positions 1-15 (MKSLLLLVLISICWA) are excised as a propeptide. Asparagine 21 and asparagine 56 each carry an N-linked (GlcNAc...) asparagine glycan. The region spanning 38–152 (PHLLVEAEQA…EGLEDDTVVV (115 aa)) is the Ig-like V-type domain. Disulfide bonds link cysteine 61/cysteine 139, cysteine 181/cysteine 252, cysteine 205/cysteine 226, cysteine 279/cysteine 349, and cysteine 304/cysteine 325. 2 consecutive Link domains span residues 159-254 (VVFP…FCFT) and 259-351 (GRFY…YCFR).

Belongs to the HAPLN family. Widely expressed. Weakly expressed in the brain.

Its subcellular location is the secreted. It localises to the extracellular space. It is found in the extracellular matrix. Its function is as follows. Stabilizes the aggregates of proteoglycan monomers with hyaluronic acid in the extracellular cartilage matrix. This Homo sapiens (Human) protein is Hyaluronan and proteoglycan link protein 1 (HAPLN1).